A 324-amino-acid chain; its full sequence is Heat-inducible transcription repressor HrcA (324 aa).

It belongs to the HrcA family.

Functionally, negative regulator of class I heat shock genes (grpE-dnaK-dnaJ and groELS operons). Prevents heat-shock induction of these operons. This chain is Heat-inducible transcription repressor HrcA, found in Parasynechococcus marenigrum (strain WH8102).